The sequence spans 258 residues: Acyl-[acyl-carrier-protein]--UDP-N-acetylglucosamine O-acyltransferase (258 aa).

It belongs to the transferase hexapeptide repeat family. LpxA subfamily. In terms of assembly, homotrimer.

The protein localises to the cytoplasm. It catalyses the reaction a (3R)-hydroxyacyl-[ACP] + UDP-N-acetyl-alpha-D-glucosamine = a UDP-3-O-[(3R)-3-hydroxyacyl]-N-acetyl-alpha-D-glucosamine + holo-[ACP]. The protein operates within glycolipid biosynthesis; lipid IV(A) biosynthesis; lipid IV(A) from (3R)-3-hydroxytetradecanoyl-[acyl-carrier-protein] and UDP-N-acetyl-alpha-D-glucosamine: step 1/6. In terms of biological role, involved in the biosynthesis of lipid A, a phosphorylated glycolipid that anchors the lipopolysaccharide to the outer membrane of the cell. The protein is Acyl-[acyl-carrier-protein]--UDP-N-acetylglucosamine O-acyltransferase of Neisseria meningitidis serogroup B (strain ATCC BAA-335 / MC58).